A 152-amino-acid polypeptide reads, in one-letter code: Anaerobic nitrite reductase HBI (152 aa).

Residues 2 to 151 (ALTEKQEALL…LVATIKAEMK (150 aa)) form the Globin domain. The Homodimerization motif lies at 35-39 (EAAPE). 5 residues coordinate heme b: serine 45, lysine 59, histidine 63, arginine 93, and histidine 98. A Homodimerization motif is present at residues 105–117 (DPHFEVMKGALLG).

The protein belongs to the plant globin family. As to quaternary structure, homodimer. Requires heme b as cofactor. Root nodules.

The protein localises to the cytoplasm. It is found in the nucleus. The catalysed reaction is Fe(III)-heme b-[protein] + nitric oxide + H2O = Fe(II)-heme b-[protein] + nitrite + 2 H(+). Phytoglobin that reduces nitrite to nitric oxide (NO) under anoxic conditions (e.g. during flooding or in waterlogged soil) and upon root nodulation. Required for general plant development and during nodulation, especially for the onset of symbiosis. Monitors nitric oxide (NO) levels during early phase of the nitrogen-fixing symbiosis and buffers oxygen in functioning nodules. May not function as an oxygen storage or transport protein. Has an unusually high affinity for O(2) through a hexacoordinate heme iron because of a very low dissociation constant. The sequence is that of Anaerobic nitrite reductase HBI from Casuarina glauca (Swamp oak).